The chain runs to 79 residues: Short neurotoxin 1/5 (79 aa).

Positions 1–21 are cleaved as a signal peptide; it reads MKTLLLTLVMVTIMCLDLGYT. Intrachain disulfides connect Cys-24-Cys-41, Cys-34-Cys-59, Cys-63-Cys-71, and Cys-72-Cys-77.

It belongs to the three-finger toxin family. Short-chain subfamily. Type III alpha-neurotoxin sub-subfamily. In terms of tissue distribution, expressed by the venom gland.

The protein resides in the secreted. Its function is as follows. Binds with high affinity to muscle nicotinic acetylcholine receptor (nAChR) and inhibit acetylcholine from binding to the receptor, thereby impairing neuromuscular transmission. Compete with the binding of alpha-bungarotoxin on muscle AChR (from Torpedo) with an IC(50) of 0.31 uM (SNTX1) and 3.1 uM (SNTX5). Is able of exerting muscle paralysis, spasms and increased respiration. The polypeptide is Short neurotoxin 1/5 (Pseudonaja textilis (Eastern brown snake)).